A 78-amino-acid polypeptide reads, in one-letter code: Defensin-like protein 149 (78 aa).

An N-terminal signal peptide occupies residues 1–25 (MMKKLIQLSFTVMIIFTILVLGVVA). 4 cysteine pairs are disulfide-bonded: Cys-36–Cys-77, Cys-45–Cys-65, Cys-50–Cys-71, and Cys-54–Cys-73.

The protein belongs to the DEFL family.

Its subcellular location is the secreted. The sequence is that of Defensin-like protein 149 (LCR5) from Arabidopsis thaliana (Mouse-ear cress).